The chain runs to 343 residues: Glyceraldehyde-3-phosphate dehydrogenase (343 aa).

NAD(+) contacts are provided by residues 12-13 (SI) and Gly114. 143–145 (SCN) contributes to the D-glyceraldehyde 3-phosphate binding site. Cys144 acts as the Nucleophile in catalysis. Arg172 is an NAD(+) binding site. 198–199 (HG) lines the D-glyceraldehyde 3-phosphate pocket. Gln307 is a binding site for NAD(+).

It belongs to the glyceraldehyde-3-phosphate dehydrogenase family. As to quaternary structure, homotetramer.

The protein resides in the cytoplasm. It carries out the reaction D-glyceraldehyde 3-phosphate + phosphate + NADP(+) = (2R)-3-phospho-glyceroyl phosphate + NADPH + H(+). It catalyses the reaction D-glyceraldehyde 3-phosphate + phosphate + NAD(+) = (2R)-3-phospho-glyceroyl phosphate + NADH + H(+). The protein operates within carbohydrate degradation; glycolysis; pyruvate from D-glyceraldehyde 3-phosphate: step 1/5. This Methanocaldococcus jannaschii (strain ATCC 43067 / DSM 2661 / JAL-1 / JCM 10045 / NBRC 100440) (Methanococcus jannaschii) protein is Glyceraldehyde-3-phosphate dehydrogenase (gap).